A 669-amino-acid chain; its full sequence is tRNA 5-methylaminomethyl-2-thiouridine biosynthesis bifunctional protein MnmC (669 aa).

The segment at 1 to 246 (MIKNANIHFN…KRSMLIGTLK (246 aa)) is tRNA (mnm(5)s(2)U34)-methyltransferase. Positions 271–669 (IGGGIASSCI…IVRDLIRNKI (399 aa)) are FAD-dependent cmnm(5)s(2)U34 oxidoreductase.

In the N-terminal section; belongs to the methyltransferase superfamily. tRNA (mnm(5)s(2)U34)-methyltransferase family. It in the C-terminal section; belongs to the DAO family. Requires FAD as cofactor.

It localises to the cytoplasm. It carries out the reaction 5-aminomethyl-2-thiouridine(34) in tRNA + S-adenosyl-L-methionine = 5-methylaminomethyl-2-thiouridine(34) in tRNA + S-adenosyl-L-homocysteine + H(+). Functionally, catalyzes the last two steps in the biosynthesis of 5-methylaminomethyl-2-thiouridine (mnm(5)s(2)U) at the wobble position (U34) in tRNA. Catalyzes the FAD-dependent demodification of cmnm(5)s(2)U34 to nm(5)s(2)U34, followed by the transfer of a methyl group from S-adenosyl-L-methionine to nm(5)s(2)U34, to form mnm(5)s(2)U34. The polypeptide is tRNA 5-methylaminomethyl-2-thiouridine biosynthesis bifunctional protein MnmC (Pseudoalteromonas translucida (strain TAC 125)).